The following is a 437-amino-acid chain: RING finger protein 150 (437 aa).

An N-terminal signal peptide occupies residues 1–34; the sequence is MTMSLIQACRSLALSTWLLSFCFVHLLCLDFTVA. The Extracellular portion of the chain corresponds to 35 to 207; the sequence is EKEEWYTAFV…NLQKYVSRTS (173 aa). 4 N-linked (GlcNAc...) asparagine glycosylation sites follow: Asn45, Asn124, Asn152, and Asn185. A PA domain is found at 80–182; it reads SPKQDARGEV…PKGKEIVSLL (103 aa). The chain crosses the membrane as a helical span at residues 208-228; the sequence is VVFVSISFIVLMIISLAWLVF. At 229-437 the chain is on the cytoplasmic side; it reads YYIQRFRYAN…TDQDCEEVKS (209 aa). The RING-type; atypical zinc-finger motif lies at 277–318; the sequence is CAVCIEGYKPNDVVRILPCRHLFHKSCVDPWLLDHRTCPMCK.

It localises to the membrane. This is RING finger protein 150 (Rnf150) from Mus musculus (Mouse).